Here is a 250-residue protein sequence, read N- to C-terminus: 2,3-bisphosphoglycerate-dependent phosphoglycerate mutase (250 aa).

Substrate is bound by residues 10 to 17 (RHGESQWN), 23 to 24 (TG), R62, 89 to 92 (ERHY), K100, 116 to 117 (RR), and 185 to 186 (GN). H11 (tele-phosphohistidine intermediate) is an active-site residue. E89 acts as the Proton donor/acceptor in catalysis.

This sequence belongs to the phosphoglycerate mutase family. BPG-dependent PGAM subfamily. As to quaternary structure, homodimer.

The enzyme catalyses (2R)-2-phosphoglycerate = (2R)-3-phosphoglycerate. It participates in carbohydrate degradation; glycolysis; pyruvate from D-glyceraldehyde 3-phosphate: step 3/5. Its function is as follows. Catalyzes the interconversion of 2-phosphoglycerate and 3-phosphoglycerate. In Shigella dysenteriae serotype 1 (strain Sd197), this protein is 2,3-bisphosphoglycerate-dependent phosphoglycerate mutase.